Here is a 252-residue protein sequence, read N- to C-terminus: Cytochrome b6-f complex iron-sulfur subunit, chloroplastic (252 aa).

Residues 94–114 (LVLAAVAPVVASAGGCYLYYF) form a helical membrane-spanning segment. In terms of domain architecture, Rieske spans 141-235 (WFKSHKKNAR…VEDDNGKILL (95 aa)). Positions 181, 183, 199, and 202 each coordinate [2Fe-2S] cluster. Residues Cys186 and Cys201 are joined by a disulfide bond.

It belongs to the Rieske iron-sulfur protein family. The 4 large subunits of the cytochrome b6-f complex are cytochrome b6, subunit IV (17 kDa polypeptide, petD), cytochrome f and the Rieske protein, while the 4 small subunits are petG, petL, petM and petN. The complex functions as a dimer. [2Fe-2S] cluster serves as cofactor.

It is found in the plastid. It localises to the chloroplast thylakoid membrane. It catalyses the reaction 2 oxidized [plastocyanin] + a plastoquinol + 2 H(+)(in) = 2 reduced [plastocyanin] + a plastoquinone + 4 H(+)(out). In terms of biological role, component of the cytochrome b6-f complex, which mediates electron transfer between photosystem II (PSII) and photosystem I (PSI), cyclic electron flow around PSI, and state transitions. This Bigelowiella natans (Pedinomonas minutissima) protein is Cytochrome b6-f complex iron-sulfur subunit, chloroplastic (petC).